The following is a 119-amino-acid chain: Ribosome-binding factor A (119 aa).

The protein belongs to the RbfA family. Monomer. Binds 30S ribosomal subunits, but not 50S ribosomal subunits or 70S ribosomes.

It is found in the cytoplasm. Functionally, one of several proteins that assist in the late maturation steps of the functional core of the 30S ribosomal subunit. Associates with free 30S ribosomal subunits (but not with 30S subunits that are part of 70S ribosomes or polysomes). Required for efficient processing of 16S rRNA. May interact with the 5'-terminal helix region of 16S rRNA. The chain is Ribosome-binding factor A from Limosilactobacillus reuteri (strain DSM 20016) (Lactobacillus reuteri).